The primary structure comprises 548 residues: Probable zinc metalloprotease EGY1, chloroplastic (548 aa).

The transit peptide at 1-18 (MGTLTSVAFAAAVNIRFR) directs the protein to the chloroplast. Over residues 61–76 (NSNRDDSIGENGETHK) the composition is skewed to basic and acidic residues. A disordered region spans residues 61-116 (NSNRDDSIGENGETHKSSVVKTATFEEEDEETSKSSSTTSSSNEFGSDKTSMPSTI). The span at 103–116 (NEFGSDKTSMPSTI) shows a compositional bias: polar residues. A run of 8 helical transmembrane segments spans residues 242-262 (YVIA…LGIA), 290-310 (LYPF…ILLF), 326-346 (LSIP…ITQF), 361-381 (LAGP…GLFL), 388-408 (ANDL…LGLI), 416-436 (AALH…WCGL), 474-494 (MLGL…YVLI), and 516-536 (ALVG…WDEL).

It belongs to the peptidase M50B family. As to expression, expressed in roots, leaves, cotyledons, hypocotyls, stems, flowers and siliques.

The protein localises to the plastid. The protein resides in the chloroplast membrane. In terms of biological role, membrane-associated and ATP-independent metalloprotease required for development of both thylakoid grana and well-organized lamellae in chloroplast. Required for the accumulation of chlorophyll and chlorophyll a/b binding (CAB) proteins (from both PS I and PS II) in chloroplast membranes, and for grana formation and normal chloroplast development. Involved in the regulation of nuclear gene expression in response to ammonium stress and interacts with ABA signaling. Carries out beta-casein degradation in an ATP-independent manner in vitro. The protein is Probable zinc metalloprotease EGY1, chloroplastic (EGY1) of Arabidopsis thaliana (Mouse-ear cress).